Here is a 96-residue protein sequence, read N- to C-terminus: Co-chaperonin GroES (96 aa).

It belongs to the GroES chaperonin family. In terms of assembly, heptamer of 7 subunits arranged in a ring. Interacts with the chaperonin GroEL.

The protein localises to the cytoplasm. Its function is as follows. Together with the chaperonin GroEL, plays an essential role in assisting protein folding. The GroEL-GroES system forms a nano-cage that allows encapsulation of the non-native substrate proteins and provides a physical environment optimized to promote and accelerate protein folding. GroES binds to the apical surface of the GroEL ring, thereby capping the opening of the GroEL channel. This Syntrophomonas wolfei subsp. wolfei (strain DSM 2245B / Goettingen) protein is Co-chaperonin GroES.